A 361-amino-acid polypeptide reads, in one-letter code: MKDSIKAKLQSLIERHEEVSALLSEAGIISDQNKFRDLSKEYSHLEPIVKAFKEYTQALEDKQAAYEMLNEKDAELVEMAKEELKLANEAIEKLESELQILLLPRDPNDDANVFLEIRAGTGGDEASIFSGDLFKMYSKYAEQRGWKIEVISASEGEHGGYKEIISRIYGDGVYSQLKFESGAHRVQRVPATESQGRIHTSACTVAVMPEADEVEGIDINPADIKVDTFRASGAGGQHVNKTDSAIRITHIPTGVVVECQDQRSQHKNRAAAMLMLKSKLLQAEIDKQQKEQSDTRKSLVGSGDRSERIRTYNYPQGRVTDHRINLTLYKLDEVMEGSLDSIIQPLVLEHQADLLATMSDE.

An N5-methylglutamine modification is found at Q237. The segment covering 287–297 (KQQKEQSDTRK) has biased composition (basic and acidic residues). Residues 287-313 (KQQKEQSDTRKSLVGSGDRSERIRTYN) form a disordered region.

Belongs to the prokaryotic/mitochondrial release factor family. Methylated by PrmC. Methylation increases the termination efficiency of RF1.

It localises to the cytoplasm. Peptide chain release factor 1 directs the termination of translation in response to the peptide chain termination codons UAG and UAA. The polypeptide is Peptide chain release factor 1 (Francisella tularensis subsp. novicida (strain U112)).